A 144-amino-acid polypeptide reads, in one-letter code: Actin-associated protein FAM107A (144 aa).

A coiled-coil region spans residues 70–90; the sequence is VLEHRRRNQLIKKKEEELEAK. The short motif at 74-84 is the Nuclear localization signal element; that stretch reads RRRNQLIKKKE. The interval 104-123 is disordered; sequence QQRLNQLENPPQRDEDHAPE. Residues 114–123 show a composition bias toward basic and acidic residues; sequence PQRDEDHAPE.

Interacts with ACTB. Interacts with F-actin. Interacts with PRDX1. Interacts with COMMD1; this interaction stabilizes COMMD1 in the nucleus. Interacts with MAP1A. As to expression, expressed in septum, the neocortex, the CA3 region of the hippocampus and the cerebellum (at protein level).

It is found in the nucleus. The protein localises to the cytoplasm. It localises to the cytoskeleton. Its subcellular location is the stress fiber. The protein resides in the cell junction. It is found in the focal adhesion. The protein localises to the cell projection. It localises to the ruffle membrane. Its subcellular location is the synapse. Stress-inducible actin-binding protein that plays a role in synaptic and cognitive functions by modulating actin filamentous (F-actin) dynamics. Mediates polymerization of globular actin to F-actin. Also binds to, stabilizes and bundles F-actin. Involved in synaptic function by regulating neurite outgrowth in an actin-dependent manner and for the acquisition of hippocampus-dependent cognitive function, such as learning and long-term memory. Plays a role in the actin and microtubule cytoskeleton organization; negatively regulates focal adhesion (FA) assembly promoting malignant glial cell migration in an actin-, microtubule- and MAP1A-dependent manner. Also involved in neuroblastoma G1/S phase cell cycle progression and cell proliferation inhibition by stimulating ubiquitination of NF-kappa-B subunit RELA and NF-kappa-B degradation in a COMMD1- and actin-dependent manner. May play a role in tumor development. This Mus musculus (Mouse) protein is Actin-associated protein FAM107A.